The following is an 840-amino-acid chain: V-type proton ATPase subunit a, vacuolar isoform (840 aa).

An N-acetylalanine modification is found at Ala2. The Cytoplasmic segment spans residues 2–404; sequence AEKEEAIFRS…DCYGIAQYRE (403 aa). Positions 117–145 form a coiled coil; it reads LEERLIQMEDATDQIEVQKNDLEQYRFIL. A helical transmembrane segment spans residues 405–423; that stretch reads INAGLPTIVTFPFMFAIMF. Over 424-425 the chain is Vacuolar; sequence GD. A helical transmembrane segment spans residues 426-442; it reads MGHGFLMTLAALSLVLN. Residues 443–456 are Cytoplasmic-facing; the sequence is EKKINKMKRGEIFD. Residues 457-486 form a helical membrane-spanning segment; that stretch reads MAFTGRYIILLMGVFSMYTGFLYNDIFSKT. The Vacuolar portion of the chain corresponds to 487-534; the sequence is MTIFKSGWKWPDHWKKGESITATSVGTYPIGLDWAWHGTENALLFSNS. The helical transmembrane segment at 535–554 threads the bilayer; the sequence is YKMKLSILMGFIHMTYSYFF. Over 555–572 the chain is Cytoplasmic; sequence SLANHLYFNSMIDIIGNF. Residues 573–593 traverse the membrane as a helical segment; it reads IPGLLFMQGIFGYLSVCIVYK. Residues 594 to 636 are Vacuolar-facing; the sequence is WAVDWVKDGKPAPGLLNMLINMFLSPGTIDDELYPHQAKVQVF. A helical transmembrane segment spans residues 637 to 656; sequence LLLMALVCIPWLLLVKPLHF. Residues 657–719 are Cytoplasmic-facing; it reads KFTHKKKSHE…DIMIHQVIHT (63 aa). A helical transmembrane segment spans residues 720-744; the sequence is IEFCLNCVSHTASYLRLWALSLAHA. Residues 745–765 lie on the Vacuolar side of the membrane; the sequence is QLSSVLWTMTIQIAFGFRGFV. A helical membrane pass occupies residues 766 to 804; the sequence is GVFMTVALFAMWFALTCAVLVLMEGTSAMLHSLRLHWVE. Topologically, residues 805-840 are cytoplasmic; the sequence is SMSKFFVGEGLPYEPFAFEYKDMEVAVASASSSASS.

The protein belongs to the V-ATPase 116 kDa subunit family. V-ATPase is a heteromultimeric enzyme composed of a peripheral catalytic V1 complex (components A to H) attached to an integral membrane V0 proton pore complex (components: a, c, c', c'', d, e, f and VOA1). Glycosylated.

It localises to the vacuole membrane. Subunit of the V0 complex of vacuolar(H+)-ATPase (V-ATPase), a multisubunit enzyme composed of a peripheral complex (V1) that hydrolyzes ATP and a membrane integral complex (V0) that translocates protons. V-ATPase is responsible for acidifying and maintaining the pH of intracellular compartments. Is present only in vacuolar V-ATPase complexes; enzymes containing this subunit have a 4-fold higher ratio of proton transport to ATP hydrolysis than complexes containing the Golgi/endosomal isoform and undergo reversible dissociation of V1 and V0 in response to glucose depletion. The chain is V-type proton ATPase subunit a, vacuolar isoform from Saccharomyces cerevisiae (strain ATCC 204508 / S288c) (Baker's yeast).